The following is a 369-amino-acid chain: Quinolinate synthase (369 aa).

Residues histidine 47 and serine 64 each coordinate iminosuccinate. Position 111 (cysteine 111) interacts with [4Fe-4S] cluster. Residues 142–144 (YVN) and serine 163 contribute to the iminosuccinate site. Residue cysteine 231 coordinates [4Fe-4S] cluster. Iminosuccinate is bound by residues 257 to 259 (HPE) and threonine 274. Cysteine 321 contributes to the [4Fe-4S] cluster binding site.

Belongs to the quinolinate synthase family. Type 3 subfamily. [4Fe-4S] cluster is required as a cofactor.

Its subcellular location is the cytoplasm. It carries out the reaction iminosuccinate + dihydroxyacetone phosphate = quinolinate + phosphate + 2 H2O + H(+). It functions in the pathway cofactor biosynthesis; NAD(+) biosynthesis; quinolinate from iminoaspartate: step 1/1. Its function is as follows. Catalyzes the condensation of iminoaspartate with dihydroxyacetone phosphate to form quinolinate. In Bacillus licheniformis (strain ATCC 14580 / DSM 13 / JCM 2505 / CCUG 7422 / NBRC 12200 / NCIMB 9375 / NCTC 10341 / NRRL NRS-1264 / Gibson 46), this protein is Quinolinate synthase.